A 739-amino-acid polypeptide reads, in one-letter code: Phosphoribosylformylglycinamidine synthase subunit PurL (739 aa).

His53 is an active-site residue. Residues Tyr56 and Lys95 each coordinate ATP. Glu97 provides a ligand contact to Mg(2+). Substrate contacts are provided by residues 98 to 101 and Arg120; that span reads SHNH. The active-site Proton acceptor is the His99. Asp121 is a Mg(2+) binding site. Gln244 provides a ligand contact to substrate. Asp274 is a Mg(2+) binding site. Residue 318-320 coordinates substrate; that stretch reads ESQ. 2 residues coordinate ATP: Asp501 and Gly538. Asn539 is a Mg(2+) binding site. Ser541 lines the substrate pocket.

This sequence belongs to the FGAMS family. As to quaternary structure, monomer. Part of the FGAM synthase complex composed of 1 PurL, 1 PurQ and 2 PurS subunits.

The protein resides in the cytoplasm. It carries out the reaction N(2)-formyl-N(1)-(5-phospho-beta-D-ribosyl)glycinamide + L-glutamine + ATP + H2O = 2-formamido-N(1)-(5-O-phospho-beta-D-ribosyl)acetamidine + L-glutamate + ADP + phosphate + H(+). It functions in the pathway purine metabolism; IMP biosynthesis via de novo pathway; 5-amino-1-(5-phospho-D-ribosyl)imidazole from N(2)-formyl-N(1)-(5-phospho-D-ribosyl)glycinamide: step 1/2. In terms of biological role, part of the phosphoribosylformylglycinamidine synthase complex involved in the purines biosynthetic pathway. Catalyzes the ATP-dependent conversion of formylglycinamide ribonucleotide (FGAR) and glutamine to yield formylglycinamidine ribonucleotide (FGAM) and glutamate. The FGAM synthase complex is composed of three subunits. PurQ produces an ammonia molecule by converting glutamine to glutamate. PurL transfers the ammonia molecule to FGAR to form FGAM in an ATP-dependent manner. PurS interacts with PurQ and PurL and is thought to assist in the transfer of the ammonia molecule from PurQ to PurL. The polypeptide is Phosphoribosylformylglycinamidine synthase subunit PurL (Listeria innocua serovar 6a (strain ATCC BAA-680 / CLIP 11262)).